Consider the following 320-residue polypeptide: Glyoxylate/hydroxypyruvate reductase B (320 aa).

Residues arginine 233 and glutamate 262 contribute to the active site. The Proton donor role is filled by histidine 281.

It belongs to the D-isomer specific 2-hydroxyacid dehydrogenase family. GhrB subfamily. Homodimer.

Its subcellular location is the cytoplasm. The catalysed reaction is glycolate + NADP(+) = glyoxylate + NADPH + H(+). The enzyme catalyses (R)-glycerate + NAD(+) = 3-hydroxypyruvate + NADH + H(+). It carries out the reaction (R)-glycerate + NADP(+) = 3-hydroxypyruvate + NADPH + H(+). In terms of biological role, catalyzes the NADPH-dependent reduction of glyoxylate and hydroxypyruvate into glycolate and glycerate, respectively. The chain is Glyoxylate/hydroxypyruvate reductase B from Pectobacterium atrosepticum (strain SCRI 1043 / ATCC BAA-672) (Erwinia carotovora subsp. atroseptica).